The chain runs to 367 residues: Prenyltransferase idtC (367 aa).

Residues 1 to 22 (MTTLAWFAGRSMVLDLAALTSA) form the signal peptide. Residues 32–42 (TSTPTSTPTST) show a composition bias toward low complexity. Residues 32-84 (TSTPTSTPTSTDKAGTPPGSTIHHYGYPQGSVTKPNNSKTEKENGSPKDSKGN) form a disordered region. N-linked (GlcNAc...) asparagine glycosylation is present at Asn67. Basic and acidic residues predominate over residues 70–82 (KTEKENGSPKDSK). His132 lines the substrate pocket. Residues Asp139 and Asp143 each contribute to the Mg(2+) site. Arg148 contacts substrate. An N-linked (GlcNAc...) asparagine glycan is attached at Asn150. The substrate site is built by Lys233, Thr234, Gln264, Asn271, and Lys281.

This sequence belongs to the FPP/GGPP synthase family. Requires Mg(2+) as cofactor.

It functions in the pathway secondary metabolite biosynthesis. Functionally, prenyltransferase; part of the gene cluster that mediates the biosynthesis of paspalitrems, indole-diterpene (IDT) mycotoxins that are potent tremorgens in mammals. The geranylgeranyl diphosphate (GGPP) synthase idtG is proposed to catalyze the first step in IDT biosynthesis via catalysis of a series of iterative condensations of isopentenyl diphosphate (IPP) with dimethylallyl diphosphate (DMAPP), geranyl diphosphate (GPP), and farnesyl diphosphate (FPP), to form GGPP. Condensation of indole-3-glycerol phosphate with GGPP by the prenyltransferase idtC then forms 3-geranylgeranylindole (3-GGI). Epoxidation of the two terminal alkenes of the geranylgeranyl moiety by the FAD-dependent monooxygenase idtM, and cyclization by the terpene cyclase idtB then leads to the production of paspaline. The cytochrome P450 monooxygenase idtP then catalyzes oxidative elimination of the pendant methyl group at C-12 of paspaline and generates the C-10 ketone to yield 13-desoxypaxilline. The cytochrome P450 monooxygenase idtQ may catalyze the C-13 oxidation of 13-desoxypaxilline to afford paxilline. Considering that both paspalicine and paxilline were detected in C.paspali, idtQ also catalyzes the formation of paspalinine from 13-desoxypaxilline via paspalicine as an intermediate. Finally, the alpha-prenyltransferase idtF prenylates paspalinine at the C-20 or the C-21 positions to yield paspalitrems A and C, respectively. The hydroxylation of paspalitrem A at C-32 by a still unknown oxidase affords paspalitrem B. This is Prenyltransferase idtC from Claviceps paspali (Rye ergot fungus).